We begin with the raw amino-acid sequence, 382 residues long: uncharacterized protein (382 aa).

12 helical membrane passes run 14-34 (GLLLLTLAIAVLNTLVPLWLA), 45-65 (VVSSSYFTGNLVGTLLTGYVI), 75-95 (YLASFIFAAGCAGLGLMIGFW), 102-122 (FVAGVGCAMIWVVVESALMCS), 131-151 (LLAAYMMVYYVGTFLGQLLVS), 157-177 (LMSVLPWVTGLTLAGILPLLF), 206-226 (VNGCIISGIVLGSLYGLMPLF), 235-255 (ASIGFWMAVLVSAGILGQWPI), 270-290 (VQVFVVILGSIAMLSQAAMAP), 291-311 (ALFILGAAGFTLYPVAMAWAC), 325-345 (ALLLSYTVGSLLGPSFTAMLM), and 348-368 (FSDNLLFIMIASVSFIYLLML).

It belongs to the major facilitator superfamily. YcaD (TC 2.A.1.26) family.

It is found in the cell inner membrane. This is an uncharacterized protein from Escherichia coli O17:K52:H18 (strain UMN026 / ExPEC).